The following is a 220-amino-acid chain: Aspartic protease inhibitor 5 (220 aa).

An N-terminal signal peptide occupies residues 1–23 (MMKCLFLLCLCLLPIVVFSSTFT). The propeptide occupies 24–32 (SQNLIDLPS). A Vacuolar targeting signal motif is present at residues 26 to 31 (NLIDLP). Asparagine 51 is a glycosylation site (N-linked (GlcNAc...) asparagine). 2 disulfides stabilise this stretch: cysteine 80/cysteine 125 and cysteine 174/cysteine 185.

Belongs to the protease inhibitor I3 (leguminous Kunitz-type inhibitor) family.

It is found in the vacuole. Its function is as follows. Inhibitor of cathepsin D (aspartic protease). May also inhibit trypsin and chymotrypsin (serine proteases). Protects the plant by inhibiting proteases of invading organisms. This Solanum tuberosum (Potato) protein is Aspartic protease inhibitor 5.